The sequence spans 492 residues: Regulatory protein ViaA (492 aa).

This sequence belongs to the ViaA family. In terms of assembly, homodimer. Interacts with RavA.

It is found in the cytoplasm. Functionally, component of the RavA-ViaA chaperone complex, which may act on the membrane to optimize the function of some of the respiratory chains. ViaA stimulates the ATPase activity of RavA. The polypeptide is Regulatory protein ViaA (Pectobacterium atrosepticum (strain SCRI 1043 / ATCC BAA-672) (Erwinia carotovora subsp. atroseptica)).